The sequence spans 148 residues: Secretory phospholipase A2 (148 aa).

A signal peptide spans M1–A23. N61 carries N-linked (GlcNAc...) asparagine glycosylation. C62 and C78 are disulfide-bonded. Residue H81 is part of the active site. Position 82 (D82) interacts with Ca(2+).

The protein belongs to the phospholipase A2 family. It depends on Ca(2+) as a cofactor.

The protein localises to the secreted. It carries out the reaction a 1,2-diacyl-sn-glycero-3-phosphocholine + H2O = a 1-acyl-sn-glycero-3-phosphocholine + a fatty acid + H(+). Functionally, secretory phospholipase that catalyzes the calcium-dependent hydrolysis of the 2-acyl groups in 3-sn-phosphoglycerides. Increases the ability to utilize host-derived nutrients and lipids, and promotes lipid dropplets accumulation. Plays a role in virulence. This chain is Secretory phospholipase A2, found in Arthroderma benhamiae (strain ATCC MYA-4681 / CBS 112371) (Trichophyton mentagrophytes).